A 66-amino-acid chain; its full sequence is Early E3 7.7 kDa protein (66 aa).

2 N-linked (GlcNAc...) asparagine; by host glycosylation sites follow: Asn7 and Asn24. The helical transmembrane segment at 44–64 (ITILIVIGILILSVILYFLFS) threads the bilayer.

It localises to the host nucleus membrane. This chain is Early E3 7.7 kDa protein, found in Human adenovirus B serotype 7 (HAdV-7).